The chain runs to 500 residues: NAD(P)H-quinone oxidoreductase chain 4, chloroplastic (500 aa).

14 helical membrane-spanning segments follow: residues 4–24, 37–57, 80–100, 113–130, 134–154, 167–187, 208–228, 242–262, 272–292, 305–325, 330–350, 386–406, 416–436, and 462–482; these read FYWLTIIVVLPISAGSLIALL, ICICLFELLLTTYVFCYHFQL, LGIDGLSIGPILLTGFITTLA, LFHFLMLAMYSGQIGLFS, LLLFFIMWELELIPVYLLLSM, FILYTAGGSIFLLMGVLGMGL, ALEIIFYFGFLIAYAVKSPII, HYSTCMLLAGILLKMGAYGLV, AHSIFSPWLMIVGTIQIIYAA, IAYSSVSHMGFIIIGISSITD, GAILQIISHGFIGAALFFLAG, LALPGMSGFVAELVIFLGIIT, ILITFVMAIGMILTPIYSLSM, and IFILICILLPIIGIGIYPDFV.

Belongs to the complex I subunit 4 family.

Its subcellular location is the plastid. The protein localises to the chloroplast thylakoid membrane. The enzyme catalyses a plastoquinone + NADH + (n+1) H(+)(in) = a plastoquinol + NAD(+) + n H(+)(out). It carries out the reaction a plastoquinone + NADPH + (n+1) H(+)(in) = a plastoquinol + NADP(+) + n H(+)(out). This chain is NAD(P)H-quinone oxidoreductase chain 4, chloroplastic, found in Nuphar advena (Common spatterdock).